Here is a 172-residue protein sequence, read N- to C-terminus: C-phycocyanin-2 beta subunit (172 aa).

An N4-methylasparagine modification is found at Asn72. (2R,3E)-phycocyanobilin is bound by residues Cys82 and Cys153.

The protein belongs to the phycobiliprotein family. As to quaternary structure, heterodimer of an alpha and a beta subunit, which further assembles into trimers and the trimers into hexamers. In terms of processing, contains two covalently linked bilin chromophores.

The protein resides in the cellular thylakoid membrane. Light-harvesting photosynthetic bile pigment-protein from the phycobiliprotein complex (phycobilisome, PBS). Phycocyanin is the major phycobiliprotein in the PBS rod. This is C-phycocyanin-2 beta subunit (cpcB2) from Pseudanabaena tenuis (strain PCC 7409).